A 607-amino-acid chain; its full sequence is 1-deoxy-D-xylulose-5-phosphate synthase (607 aa).

Thiamine diphosphate is bound by residues His-63 and 104–106 (GHS). Mg(2+) is bound at residue Asp-135. Residues 136–137 (GA), Asn-164, Tyr-271, and Glu-351 each bind thiamine diphosphate. Asn-164 lines the Mg(2+) pocket.

It belongs to the transketolase family. DXPS subfamily. In terms of assembly, homodimer. Requires Mg(2+) as cofactor. It depends on thiamine diphosphate as a cofactor.

It carries out the reaction D-glyceraldehyde 3-phosphate + pyruvate + H(+) = 1-deoxy-D-xylulose 5-phosphate + CO2. It participates in metabolic intermediate biosynthesis; 1-deoxy-D-xylulose 5-phosphate biosynthesis; 1-deoxy-D-xylulose 5-phosphate from D-glyceraldehyde 3-phosphate and pyruvate: step 1/1. Catalyzes the acyloin condensation reaction between C atoms 2 and 3 of pyruvate and glyceraldehyde 3-phosphate to yield 1-deoxy-D-xylulose-5-phosphate (DXP). This chain is 1-deoxy-D-xylulose-5-phosphate synthase, found in Campylobacter hominis (strain ATCC BAA-381 / DSM 21671 / CCUG 45161 / LMG 19568 / NCTC 13146 / CH001A).